Consider the following 374-residue polypeptide: Nuclear hormone receptor family member nhr-57 (374 aa).

A DNA-binding region (nuclear receptor) is located at residues 7–84; sequence RKYCSVCHQL…VGMNPEVVQA (78 aa). NR C4-type zinc fingers lie at residues 10–30 and 48–67; these read CSVC…CKAC and CRKK…CKSC. Residues 124–374 form the NR LBD domain; that stretch reads QMTPTLCGVM…DKIYKIIDGQ (251 aa).

It belongs to the nuclear hormone receptor family.

The protein resides in the nucleus. Functionally, orphan nuclear receptor. The polypeptide is Nuclear hormone receptor family member nhr-57 (nhr-57) (Caenorhabditis elegans).